The chain runs to 457 residues: Bifunctional protein GlmU (457 aa).

Residues 1 to 230 form a pyrophosphorylase region; sequence MSKRYAVVLA…FEESLGVNDR (230 aa). Residues 9–12, K23, Q73, and 78–79 contribute to the UDP-N-acetyl-alpha-D-glucosamine site; these read LAAG and GT. D103 provides a ligand contact to Mg(2+). The UDP-N-acetyl-alpha-D-glucosamine site is built by G140, E155, N170, and N228. N228 is a binding site for Mg(2+). A linker region spans residues 231-251; sequence IALAEASKLMQRRINENHMRN. The tract at residues 252–457 is N-acetyltransferase; that stretch reads GVTLVNPEST…GYAKHLNHSK (206 aa). R333 and K351 together coordinate UDP-N-acetyl-alpha-D-glucosamine. Catalysis depends on H363, which acts as the Proton acceptor. The UDP-N-acetyl-alpha-D-glucosamine site is built by Y366 and N377. Acetyl-CoA is bound by residues 386–387, A423, and R440; that span reads NY.

The protein in the N-terminal section; belongs to the N-acetylglucosamine-1-phosphate uridyltransferase family. It in the C-terminal section; belongs to the transferase hexapeptide repeat family. In terms of assembly, homotrimer. It depends on Mg(2+) as a cofactor.

Its subcellular location is the cytoplasm. The enzyme catalyses alpha-D-glucosamine 1-phosphate + acetyl-CoA = N-acetyl-alpha-D-glucosamine 1-phosphate + CoA + H(+). The catalysed reaction is N-acetyl-alpha-D-glucosamine 1-phosphate + UTP + H(+) = UDP-N-acetyl-alpha-D-glucosamine + diphosphate. Its pathway is nucleotide-sugar biosynthesis; UDP-N-acetyl-alpha-D-glucosamine biosynthesis; N-acetyl-alpha-D-glucosamine 1-phosphate from alpha-D-glucosamine 6-phosphate (route II): step 2/2. It participates in nucleotide-sugar biosynthesis; UDP-N-acetyl-alpha-D-glucosamine biosynthesis; UDP-N-acetyl-alpha-D-glucosamine from N-acetyl-alpha-D-glucosamine 1-phosphate: step 1/1. The protein operates within bacterial outer membrane biogenesis; LPS lipid A biosynthesis. In terms of biological role, catalyzes the last two sequential reactions in the de novo biosynthetic pathway for UDP-N-acetylglucosamine (UDP-GlcNAc). The C-terminal domain catalyzes the transfer of acetyl group from acetyl coenzyme A to glucosamine-1-phosphate (GlcN-1-P) to produce N-acetylglucosamine-1-phosphate (GlcNAc-1-P), which is converted into UDP-GlcNAc by the transfer of uridine 5-monophosphate (from uridine 5-triphosphate), a reaction catalyzed by the N-terminal domain. In Listeria monocytogenes serovar 1/2a (strain ATCC BAA-679 / EGD-e), this protein is Bifunctional protein GlmU.